Reading from the N-terminus, the 139-residue chain is Large ribosomal subunit protein bL17 (139 aa).

It belongs to the bacterial ribosomal protein bL17 family. Part of the 50S ribosomal subunit. Contacts protein L32.

This Cereibacter sphaeroides (strain ATCC 17025 / ATH 2.4.3) (Rhodobacter sphaeroides) protein is Large ribosomal subunit protein bL17.